We begin with the raw amino-acid sequence, 1009 residues long: Protein naked cuticle (1009 aa).

Composition is skewed to polar residues over residues 68–83 (IITT…ASNK) and 121–130 (LPQDMSSSGS). Residues 68-166 (IITTPPGNAS…QQQTAAAATG (99 aa)) are disordered. Positions 152-166 (QQQQQQQQTAAAATG) are enriched in low complexity. The interval 206 to 282 (EFTCDVSVEG…TVSPEGKSKS (77 aa)) is interaction with dsh. Residues 217–253 (KSSQPLQFSFTFYDLDGHHGKITKDDIVGIVYTIYES) enclose the EF-hand domain. 3 disordered regions span residues 328-433 (MSKQ…QQQL), 456-479 (AGNE…RQQD), and 515-580 (GNDS…QQQR). Residues 349-359 (RRQHRYRPRKL) show a composition bias toward basic residues. Residues 370-387 (NSEKEKERERERERESHA) show a composition bias toward basic and acidic residues. A compositionally biased stretch (basic residues) spans 403–414 (KSHHHHHHHGRY). Residues 515–525 (GNDSGNWQNRH) are compositionally biased toward polar residues. Low complexity-rich tracts occupy residues 526–535 (LQQSLQQQPQ) and 570–580 (HQQLQQQQQQR). Residues 584-613 (ECWKSALNRNDLISIIRESMEKNRLCFQLN) are required for nuclear localization and inhibition of Wnt signaling. Disordered stretches follow at residues 619–662 (NVSP…SPLS), 773–799 (SAAH…HNQK), 835–899 (LQQK…SAGS), and 955–982 (TESG…LDTS). Low complexity-rich tracts occupy residues 624–638 (RQPA…QRQR) and 653–662 (SPAAPQSPLS). A compositionally biased stretch (basic residues) spans 843–857 (RRHRHKQQQQQHHHQ). Positions 858–875 (QQQQQQQQQNQQQQQQQQ) are enriched in low complexity. Acidic residues predominate over residues 968–979 (EADEGQEQEVEL).

It belongs to the NKD family. In terms of assembly, interacts with dsh.

Its subcellular location is the cell membrane. It is found in the cytoplasm. The protein resides in the nucleus. In terms of biological role, cell autonomous antagonist of the canonical Wnt signaling pathway. May activate a second Wnt signaling pathway that controls planar cell polarity. Required for neuroblast specification. This chain is Protein naked cuticle, found in Drosophila pseudoobscura pseudoobscura (Fruit fly).